The following is a 302-amino-acid chain: Ribosomal protein L11 methyltransferase (302 aa).

The S-adenosyl-L-methionine site is built by Thr148, Gly169, Asp191, and Asn237.

It belongs to the methyltransferase superfamily. PrmA family.

The protein localises to the cytoplasm. It carries out the reaction L-lysyl-[protein] + 3 S-adenosyl-L-methionine = N(6),N(6),N(6)-trimethyl-L-lysyl-[protein] + 3 S-adenosyl-L-homocysteine + 3 H(+). Functionally, methylates ribosomal protein L11. This is Ribosomal protein L11 methyltransferase from Desulfosudis oleivorans (strain DSM 6200 / JCM 39069 / Hxd3) (Desulfococcus oleovorans).